A 68-amino-acid polypeptide reads, in one-letter code: Small ribosomal subunit protein bS21 (68 aa).

Over residues glutamate 37–alanine 49 the composition is skewed to basic and acidic residues. The interval glutamate 37–lysine 68 is disordered. The segment covering alanine 50–arginine 59 has biased composition (basic residues).

The protein belongs to the bacterial ribosomal protein bS21 family.

This chain is Small ribosomal subunit protein bS21, found in Erythrobacter litoralis (strain HTCC2594).